The following is a 243-amino-acid chain: MKHDLETLKHIIDSSNRITFFTGAGVSVASGVPDFRSMGGLFDEISKDGLSPEYLLSRDYLEDDPEGFINFCHKRLLFVDTMPNIVHDWIAKLERNQQSLGVITQNIDGLHSDAGSQHVDELHGTLNRFYCNVCHKSYTKSDVIDRTLKHCDNCGGAIRPDIVLYGEMLDQPTIIRALNKIEHADTLVVLGSSLVVQPAAGLISHFKGDNLIIINKDRTPYDSDATLVIHDDMVSVVKSLMTE.

The Deacetylase sirtuin-type domain maps to 1–243 (MKHDLETLKH…VSVVKSLMTE (243 aa)). Ala-24, Phe-35, Arg-36, Gln-105, Ile-107, Asp-108, and His-123 together coordinate NAD(+). Residue Phe-35 participates in nicotinamide binding. Nicotinamide-binding residues include Ile-107 and Asp-108. The active-site Proton acceptor is the His-123. Zn(2+)-binding residues include Cys-131, Cys-134, Cys-151, and Cys-154. Residues Ser-192, Ser-193, Asn-215, and Asp-232 each contribute to the NAD(+) site.

It belongs to the sirtuin family. Class U subfamily. Requires Zn(2+) as cofactor.

It localises to the cytoplasm. The enzyme catalyses N(6)-acetyl-L-lysyl-[protein] + NAD(+) + H2O = 2''-O-acetyl-ADP-D-ribose + nicotinamide + L-lysyl-[protein]. In terms of biological role, NAD-dependent protein deacetylase which modulates the activities of several enzymes which are inactive in their acetylated form. The sequence is that of NAD-dependent protein deacetylase from Staphylococcus aureus (strain NCTC 8325 / PS 47).